A 568-amino-acid chain; its full sequence is Sulfite reductase [NADPH] hemoprotein beta-component (568 aa).

[4Fe-4S] cluster contacts are provided by Cys426, Cys432, Cys471, and Cys475. Residue Cys475 participates in siroheme binding.

This sequence belongs to the nitrite and sulfite reductase 4Fe-4S domain family. As to quaternary structure, alpha(8)-beta(8). The alpha component is a flavoprotein, the beta component is a hemoprotein. Siroheme is required as a cofactor. The cofactor is [4Fe-4S] cluster.

The enzyme catalyses hydrogen sulfide + 3 NADP(+) + 3 H2O = sulfite + 3 NADPH + 4 H(+). It participates in sulfur metabolism; hydrogen sulfide biosynthesis; hydrogen sulfide from sulfite (NADPH route): step 1/1. Functionally, component of the sulfite reductase complex that catalyzes the 6-electron reduction of sulfite to sulfide. This is one of several activities required for the biosynthesis of L-cysteine from sulfate. In Xylella fastidiosa (strain M23), this protein is Sulfite reductase [NADPH] hemoprotein beta-component.